We begin with the raw amino-acid sequence, 102 residues long: EPIDERMAL PATTERNING FACTOR-like protein 9 (102 aa).

An N-terminal signal peptide occupies residues 1-31 (MKHEMMNIKPRCITIFFLLFALLLGNYVVQA). 3 cysteine pairs are disulfide-bonded: Cys-65–Cys-98, Cys-70–Cys-77, and Cys-73–Cys-100.

Belongs to the plant cysteine rich small secretory peptide family. Epidermal patterning factor subfamily. In terms of assembly, interacts with ERECTA and TMM. As to expression, expressed in immature organs, including leaves, stems and flower buds, but not in roots, shoot apical meristem and petals. Detected in the mesophyll tissues but not in the epidermal tissues where stomata develop.

The protein localises to the secreted. Its subcellular location is the extracellular space. It localises to the apoplast. Its function is as follows. Positively regulates stomatal density and patterning. Acts by competing with EPF2 (AC Q8LC53) for the same receptors, ERECTA (AC Q42371) and TMM (AC Q9SSD1). Not cleaved by the protease CRSP (AC Q9LNU1). The sequence is that of EPIDERMAL PATTERNING FACTOR-like protein 9 from Arabidopsis thaliana (Mouse-ear cress).